The chain runs to 128 residues: Large ribosomal subunit protein bL17 (128 aa).

It belongs to the bacterial ribosomal protein bL17 family. In terms of assembly, part of the 50S ribosomal subunit. Contacts protein L32.

The protein is Large ribosomal subunit protein bL17 of Streptococcus equi subsp. zooepidemicus (strain H70).